Reading from the N-terminus, the 743-residue chain is Catalase-peroxidase (743 aa).

The interval 1-22 (MEKQSNDAAVAGAPNDHGAAKC) is disordered. Residues 105–227 (WHSAGTYRIT…LGAVQMGLIY (123 aa)) constitute a cross-link (tryptophyl-tyrosyl-methioninium (Trp-Tyr) (with M-253)). Catalysis depends on His106, which acts as the Proton acceptor. The segment at residues 227-253 (YVNPEGPNGNPDPVAAAKDIRETFFRM) is a cross-link (tryptophyl-tyrosyl-methioninium (Tyr-Met) (with W-105)). His268 is a binding site for heme b.

Belongs to the peroxidase family. Peroxidase/catalase subfamily. Homodimer or homotetramer. It depends on heme b as a cofactor. Formation of the three residue Trp-Tyr-Met cross-link is important for the catalase, but not the peroxidase activity of the enzyme.

The enzyme catalyses H2O2 + AH2 = A + 2 H2O. The catalysed reaction is 2 H2O2 = O2 + 2 H2O. Functionally, bifunctional enzyme with both catalase and broad-spectrum peroxidase activity. In Solibacter usitatus (strain Ellin6076), this protein is Catalase-peroxidase.